Reading from the N-terminus, the 76-residue chain is Large ribosomal subunit protein eL20 (76 aa).

This sequence belongs to the eukaryotic ribosomal protein eL20 family. In terms of assembly, part of the 50S ribosomal subunit. Binds 23S rRNA.

This chain is Large ribosomal subunit protein eL20, found in Methanococcus maripaludis (strain DSM 14266 / JCM 13030 / NBRC 101832 / S2 / LL).